The primary structure comprises 273 residues: Glutamate racemase (273 aa).

Substrate is bound by residues 10-11 (DS) and 42-43 (YG). Cysteine 73 serves as the catalytic Proton donor/acceptor. 74–75 (NT) provides a ligand contact to substrate. Residue cysteine 184 is the Proton donor/acceptor of the active site. Residue 185–186 (TH) coordinates substrate.

The protein belongs to the aspartate/glutamate racemases family.

It carries out the reaction L-glutamate = D-glutamate. It functions in the pathway cell wall biogenesis; peptidoglycan biosynthesis. Its function is as follows. Provides the (R)-glutamate required for cell wall biosynthesis. This Desulforudis audaxviator (strain MP104C) protein is Glutamate racemase.